The following is a 199-amino-acid chain: Adenylyl-sulfate kinase (199 aa).

Residues 1–22 are disordered; sequence MSESNHITWHDSEVTKKQRQHK. An ATP-binding site is contributed by 34-41; it reads GLSGSGKS. Ser-108 functions as the Phosphoserine intermediate in the catalytic mechanism.

Belongs to the APS kinase family.

It catalyses the reaction adenosine 5'-phosphosulfate + ATP = 3'-phosphoadenylyl sulfate + ADP + H(+). The protein operates within sulfur metabolism; hydrogen sulfide biosynthesis; sulfite from sulfate: step 2/3. In terms of biological role, catalyzes the synthesis of activated sulfate. The protein is Adenylyl-sulfate kinase of Staphylococcus epidermidis (strain ATCC 12228 / FDA PCI 1200).